Here is a 697-residue protein sequence, read N- to C-terminus: Testis-specific gene 10 protein (697 aa).

The interval 556–688 is interaction with HIF1A; that stretch reads QMTNERISMQ…SPDRGLDRSL (133 aa). Residues 656–684 are disordered; that stretch reads NAYNLGPMKPNTKCHSPERAHHRSPDRGL. The segment covering 670–684 has biased composition (basic and acidic residues); that stretch reads HSPERAHHRSPDRGL. The residue at position 687 (Ser-687) is a Phosphoserine.

Belongs to the CEP135/TSGA10 family. Interacts with HIF1A. Post-translationally, processed into N-terminal 27-kDa and C-terminal 55-kDa fragments. Predominantly expressed in testis, in spermatozoa (at protein level). Not detected in Leydig cells. The N-terminal 27-kDa fragment is also detected in liver, while the C-terminal 55-kDa fragment is also found retina, brain and kidney (at protein level).

The protein resides in the cytoplasm. It localises to the cytoskeleton. It is found in the microtubule organizing center. The protein localises to the centrosome. Its subcellular location is the centriole. Its function is as follows. Plays a role in spermatogenesis. When overexpressed, prevents nuclear localization of HIF1A. This is Testis-specific gene 10 protein (Tsga10) from Mus musculus (Mouse).